The sequence spans 476 residues: Bifunctional protein HldE (476 aa).

The segment at 1-318 (MAQYSAEFKQ…ENAIHARPET (318 aa)) is ribokinase. 195 to 198 (NMSE) lines the ATP pocket. Asp264 is an active-site residue. The tract at residues 344-476 (MTNGCFDILH…VIEKIKLLKD (133 aa)) is cytidylyltransferase.

It in the N-terminal section; belongs to the carbohydrate kinase PfkB family. In the C-terminal section; belongs to the cytidylyltransferase family. As to quaternary structure, homodimer.

The catalysed reaction is D-glycero-beta-D-manno-heptose 7-phosphate + ATP = D-glycero-beta-D-manno-heptose 1,7-bisphosphate + ADP + H(+). The enzyme catalyses D-glycero-beta-D-manno-heptose 1-phosphate + ATP + H(+) = ADP-D-glycero-beta-D-manno-heptose + diphosphate. It functions in the pathway nucleotide-sugar biosynthesis; ADP-L-glycero-beta-D-manno-heptose biosynthesis; ADP-L-glycero-beta-D-manno-heptose from D-glycero-beta-D-manno-heptose 7-phosphate: step 1/4. Its pathway is nucleotide-sugar biosynthesis; ADP-L-glycero-beta-D-manno-heptose biosynthesis; ADP-L-glycero-beta-D-manno-heptose from D-glycero-beta-D-manno-heptose 7-phosphate: step 3/4. It participates in bacterial outer membrane biogenesis; LOS core biosynthesis. Its function is as follows. Catalyzes the phosphorylation of D-glycero-D-manno-heptose 7-phosphate at the C-1 position to selectively form D-glycero-beta-D-manno-heptose-1,7-bisphosphate. In terms of biological role, catalyzes the ADP transfer from ATP to D-glycero-beta-D-manno-heptose 1-phosphate, yielding ADP-D-glycero-beta-D-manno-heptose. This is Bifunctional protein HldE from Haemophilus influenzae (strain ATCC 51907 / DSM 11121 / KW20 / Rd).